Reading from the N-terminus, the 140-residue chain is MAIHYETKATNVGGRKGHVYTDDRALDIDIVSPAQADGKATNPEQLFAAGYASCFNGAFDLILKQNKVRDAHPEVTLTVRLEDDSDSESPKLSVSIDATIKNVISQEEAEKYLQMAHEFCPYSKATQGNINVDLNVNVVD.

The protein belongs to the OsmC/Ohr family.

In Staphylococcus aureus (strain MSSA476), this protein is Organic hydroperoxide resistance protein-like.